The sequence spans 393 residues: Phosphoglycerate kinase (393 aa).

Substrate contacts are provided by residues 21-23 (DLN), arginine 36, 59-62 (HLGR), arginine 113, and arginine 146. ATP-binding positions include lysine 197, glutamate 319, and 345-348 (GGDT).

It belongs to the phosphoglycerate kinase family. In terms of assembly, monomer.

Its subcellular location is the cytoplasm. It catalyses the reaction (2R)-3-phosphoglycerate + ATP = (2R)-3-phospho-glyceroyl phosphate + ADP. The protein operates within carbohydrate degradation; glycolysis; pyruvate from D-glyceraldehyde 3-phosphate: step 2/5. The polypeptide is Phosphoglycerate kinase (Nitratidesulfovibrio vulgaris (strain DP4) (Desulfovibrio vulgaris)).